A 492-amino-acid polypeptide reads, in one-letter code: MRAFRLASGVLRNRKVILGIGAGSLITAGNIKIRNDSKFDAFFAKGFPDELQHRSLFSVLRSAFVYEICSRAWLVKLSLGAMSLCDVFHLSFLYNPFCRYTFYKHFCGGETPQAVMATMDTLQAAGITSCLNYSREVDLDGDMDVNKIASQGVVPPQVPVPSEKNQKVLRQIADKAFESNMHIIDMATYKPGTVCAVKLTPFINPLVLQRYNSILNQYPVESACNYLEHLKSPELSTYEVSELKKFWEYADKLCQFAKEKQIPLFIDAEQTYFQDCMHAVTVDLMRKYNKEVAIVHNTYQLYLKKSRKIMDDHIKKCVAEGWLMGAKLVRGAYLNSEPRFLIHDTKAETDKDFDSAVEAIIAAAAKFAPGDPASASDPIASRKGKWGIMVASHNKKTMFESVNLAETKKVDFTKTSFYLAQLLGMADDITYALAYSQRNQQPNFCIVKYVSCGPISEVLPYLVRRARENIDALDRCKEERAYYRQALRRRIF.

Belongs to the proline oxidase family. Requires FAD as cofactor.

Its subcellular location is the mitochondrion. The catalysed reaction is L-proline + a quinone = (S)-1-pyrroline-5-carboxylate + a quinol + H(+). In terms of biological role, converts proline to delta-1-pyrroline-5-carboxylate. In Schizosaccharomyces pombe (strain 972 / ATCC 24843) (Fission yeast), this protein is Probable proline dehydrogenase, mitochondrial.